A 561-amino-acid chain; its full sequence is Cytochrome P450 monooxygenase avaL (561 aa).

Residues 19–39 (IAASCALVCIVSACYVVWSLL) traverse the membrane as a helical segment. Residue Cys-508 coordinates heme.

Belongs to the cytochrome P450 family. Heme is required as a cofactor.

The protein localises to the membrane. It functions in the pathway secondary metabolite biosynthesis. In terms of biological role, cytochrome P450 monooxygenase; part of the cluster that mediates the biosynthesis of a highly modified cyclo-arginine-tryptophan dipeptide (cRW). The first step of the pathway is perfornmed by the arginine-containing cyclodipeptide synthase (RCPDS) avaA that acts as the scaffold-generating enzyme and is responsible for formation of the cyclo-Arg-Trp (cRW) diketopiperazine. AvaB then acts as a multifunctional flavoenzyme that is responsible for generating the cyclo-Arg-formylkynurenine DKP, which can be deformylated by avaC. AvaB then further catalyzes an additional N-oxidation followed by cyclization and dehydration. The next step is an N-acetylation of the guanidine group catalyzed by the arginine N-acetyltransferase avaD. The roles of the additional enzymes identified within the ava cluster still have to be determined. The chain is Cytochrome P450 monooxygenase avaL from Aspergillus versicolor.